Here is a 435-residue protein sequence, read N- to C-terminus: Evolutionarily conserved signaling intermediate in Toll pathway, mitochondrial (435 aa).

A mitochondrion-targeting transit peptide spans 1–48; it reads MSWVQVNLLVRSLSRGWGGLCRPALSGTPFAQVSLQALRGLHCSAATH. Residue lysine 372 forms a Glycyl lysine isopeptide (Lys-Gly) (interchain with G-Cter in ubiquitin) linkage. Residues 401 to 435 form a disordered region; that stretch reads LTTSRLEGQSPPHSPPKGPEEDDETIQAEQQQGQS.

The protein belongs to the ECSIT family. As to quaternary structure, interacts with MAP3K1, SMAD4 and TRAF6. Interacts with SMAD1 only after BMP4-treatment. Part of the mitochondrial complex I assembly/MCIA complex that comprises at least the core subunits TMEM126B, NDUFAF1, ECSIT and ACAD9 and complement subunits such as COA1 and TMEM186. Interacts with NDUFAF1. Interacts with ACAD9. Interacts with TRIM59. Interacts with TMEM70 and TMEM242. Interacts (when ubiquitinated) with NF-kappa-B subunits RELA and NFKB1. Interacts with RIGI, IFIT1 and MAVS; these interactions promote RLR-mediated type I IFN induction. Interacts with SQSTM1; this interaction inhibits TLR4 signaling via functional regulation of the TRAF6-ECSIT complex. Interacts with cereblon/CRBN; this interaction inhibits the ubiquitination of ECSIT. Ubiquitinated on Lys-372; leading to translocation in the nucleus together with RELA and NFKB1 and expression of NF-kappa-B-dependent genes. As to expression, detected in heart, brain, lung, liver, skeletal muscle, kidney and testis. Detected in embryonic mesoderm and epiblast, and in extraembryonic ectoderm.

Its subcellular location is the cytoplasm. It is found in the nucleus. The protein resides in the mitochondrion. Its function is as follows. Adapter protein that plays a role in different signaling pathways including TLRs and IL-1 pathways or innate antiviral induction signaling. Plays a role in the activation of NF-kappa-B by forming a signal complex with TRAF6 and TAK1/MAP3K7 to activate TAK1/MAP3K7 leading to activation of IKKs. Once ubiquitinated, interacts with the dissociated RELA and NFKB1 proteins and translocates to the nucleus where it induces NF-kappa-B-dependent gene expression. Plays a role in innate antiviral immune response by bridging the pattern recognition receptors RIGI and MDA5/IFIT1 to the MAVS complex at the mitochondrion. Promotes proteolytic activation of MAP3K1. Involved in the BMP signaling pathway. Required for normal embryonic development. As part of the MCIA complex, involved in the assembly of the mitochondrial complex I. The polypeptide is Evolutionarily conserved signaling intermediate in Toll pathway, mitochondrial (Mus musculus (Mouse)).